Reading from the N-terminus, the 213-residue chain is MVQSCSAYGCKNRYDKDKPVSFHKFPLTRPSLCKKWEAAVRRKNFKPTKYSSICSEHFTPDCFKRECNNKLLKEDAVPTIFLCTEPHDKKEDLLEPQEQPPPPPLTPPISQVDAAIGLLMPPLQTPDNLSVFCDHNYTVEDTMHQRKRIHQLEQQVEKLRKKLKTAQQRCRRQERQLEKLKEVVHFQKEKDGASERGYVILPNDYFEIVEVPA.

The THAP-type zinc finger occupies 5 to 57 (CSAYGCKNRYDKDKPVSFHKFPLTRPSLCKKWEAAVRRKNFKPTKYSSICSEH). The HCFC1-binding motif (HBM) signature appears at 134-137 (DHNY). The stretch at 139–190 (VEDTMHQRKRIHQLEQQVEKLRKKLKTAQQRCRRQERQLEKLKEVVHFQKEK) forms a coiled coil.

It belongs to the THAP1 family. Interacts with PAWR. Component of a THAP1/THAP3-HCFC1-OGT complex that contains, either THAP1 or THAP3, HCFC1 and OGT. Interacts with OGT. Interacts (via the HBM) with HCFC1 (via the Kelch-repeat domain); the interaction recruits HCFC1 to the RRM1 promoter.

The protein localises to the nucleus. Its subcellular location is the nucleoplasm. The protein resides in the PML body. Functionally, DNA-binding transcription regulator that regulates endothelial cell proliferation and G1/S cell-cycle progression. Specifically binds the 5'-[AT]NTNN[GT]GGCA[AGT]-3' core DNA sequence and acts by modulating expression of pRB-E2F cell-cycle target genes, including RRM1. May also have pro-apoptotic activity by potentiating both serum-withdrawal and TNF-induced apoptosis. The protein is THAP domain-containing protein 1 (THAP1) of Bos taurus (Bovine).